The chain runs to 247 residues: Unique short US9 glycoprotein (247 aa).

A signal peptide spans 1 to 27 (MILWSPSTCSFFWHWCLIAVSVLSSRS). Residues 28 to 192 (KESLRLSWSS…ERLFAERRYL (165 aa)) lie on the Lumenal side of the membrane. Positions 72-168 (YRVSSSVSEC…RSVLHCRPAS (97 aa)) constitute an Ig-like H-type domain. A disulfide bridge connects residues C81 and C164. 2 N-linked (GlcNAc...) asparagine; by host glycosylation sites follow: N97 and N158. A helical transmembrane segment spans residues 193 to 213 (TFLYVVLVQFVKHVALFSFGV). Residues 214–247 (QVACCVYLRWIRPWVRGRHRATGRTSREEEAKDD) are Cytoplasmic-facing.

The protein belongs to the cytomegalovirus US6 family.

The protein localises to the host endoplasmic reticulum membrane. The protein resides in the host cytoplasm. It is found in the host cytoskeleton. Its subcellular location is the host Golgi apparatus membrane. In terms of biological role, influences cell-to-cell spread of virus in polarized cells. Promotes dissemination of virus across cell-cell junctions of polarized epithelial cells, maybe through the association with the cytoskeletal matrix. In Homo sapiens (Human), this protein is Unique short US9 glycoprotein (US9).